Reading from the N-terminus, the 236-residue chain is (5-formylfuran-3-yl)methyl phosphate synthase (236 aa).

K27 (schiff-base intermediate with substrate) is an active-site residue. The active-site Proton acceptor is the K85.

The protein belongs to the MfnB family.

The enzyme catalyses 2 D-glyceraldehyde 3-phosphate = 4-(hydroxymethyl)-2-furancarboxaldehyde phosphate + phosphate + 2 H2O. It participates in cofactor biosynthesis; methanofuran biosynthesis. Its function is as follows. Catalyzes the formation of 4-(hydroxymethyl)-2-furancarboxaldehyde phosphate (4-HFC-P) from two molecules of glyceraldehyde-3-P (GA-3-P). The polypeptide is (5-formylfuran-3-yl)methyl phosphate synthase (Methanococcus maripaludis (strain DSM 14266 / JCM 13030 / NBRC 101832 / S2 / LL)).